We begin with the raw amino-acid sequence, 150 residues long: MRNLKKTRRIQILLVAGGALVLSTALIGYGMRDGINFFRAPSQIVAEPPAAGEVFRLGGLVEAGTLVRGQGEEITFKVTDGGASVPVTFTGVLPDLFGEGKGMVGTGEMVEGTFVAREILAKHDENYMPKEVTEALKEQGVYRDPAQPEG.

Residues 1–9 (MRNLKKTRR) are Cytoplasmic-facing. A helical; Signal-anchor for type II membrane protein membrane pass occupies residues 10–30 (IQILLVAGGALVLSTALIGYG). Over 31 to 150 (MRDGINFFRA…VYRDPAQPEG (120 aa)) the chain is Periplasmic. Heme is bound by residues His123 and Tyr127.

Belongs to the CcmE/CycJ family.

Its subcellular location is the cell inner membrane. Its function is as follows. Heme chaperone required for the biogenesis of c-type cytochromes. Transiently binds heme delivered by CcmC and transfers the heme to apo-cytochromes in a process facilitated by CcmF and CcmH. The chain is Cytochrome c-type biogenesis protein CcmE from Rhodobacter capsulatus (strain ATCC BAA-309 / NBRC 16581 / SB1003).